Consider the following 169-residue polypeptide: Allophycocyanin subunit beta-18 (169 aa).

N72 is modified (N4-methylasparagine). A (2R,3E)-phycocyanobilin-binding site is contributed by C82.

It belongs to the phycobiliprotein family. In terms of assembly, heterodimer of ApcE and this beta chain. Contains one covalently linked bilin chromophore. The chromophore is added by phycocyanobilin lyase CpcUS.

It localises to the cellular thylakoid membrane. Its function is as follows. A variant beta-allophycocyanin (AP) which forms a complex with ApcE, a phycobilisome terminal emitter that influences energy transfer to photosystem II. This Picosynechococcus sp. (strain ATCC 27264 / PCC 7002 / PR-6) (Agmenellum quadruplicatum) protein is Allophycocyanin subunit beta-18 (apcF).